The sequence spans 57 residues: Large ribosomal subunit protein bL33 (57 aa).

The protein belongs to the bacterial ribosomal protein bL33 family.

In Shewanella halifaxensis (strain HAW-EB4), this protein is Large ribosomal subunit protein bL33.